The sequence spans 95 residues: Citrate lyase acyl carrier protein (95 aa).

An O-(phosphoribosyl dephospho-coenzyme A)serine modification is found at S14.

Belongs to the CitD family. As to quaternary structure, oligomer with a subunit composition of (alpha,beta,gamma)6.

The protein localises to the cytoplasm. In terms of biological role, covalent carrier of the coenzyme of citrate lyase. The chain is Citrate lyase acyl carrier protein from Haemophilus influenzae (strain PittEE).